A 652-amino-acid polypeptide reads, in one-letter code: Beta-glucuronidase (652 aa).

The signal sequence occupies residues 1–22 (MVRGPAGAWAVLGPLLWGCGLA). N-linked (GlcNAc...) asparagine glycans are attached at residues Asn-173 and Asn-420. Catalysis depends on Glu-451, which acts as the Proton donor. Asn-631 carries an N-linked (GlcNAc...) asparagine glycan.

The protein belongs to the glycosyl hydrolase 2 family. Homotetramer.

It is found in the lysosome. It catalyses the reaction a beta-D-glucuronoside + H2O = D-glucuronate + an alcohol. Its activity is regulated as follows. Inhibited by L-aspartic acid. In terms of biological role, plays an important role in the degradation of dermatan and keratan sulfates. This chain is Beta-glucuronidase (GUSB), found in Sus scrofa (Pig).